Reading from the N-terminus, the 187-residue chain is Large ribosomal subunit protein eL18y (187 aa).

A disordered region spans residues 151–187 (FGPAPGVPHSHSKPYVRAKGRKFEKARGKRKSRGFKV). 2 stretches are compositionally biased toward basic residues: residues 160-170 (SHSKPYVRAKG) and 177-187 (RGKRKSRGFKV).

The protein belongs to the eukaryotic ribosomal protein eL18 family. Interacts with NIK1. Interacts directly with EXA1. As to expression, ubiquitous.

Its subcellular location is the cytoplasm. In Arabidopsis thaliana (Mouse-ear cress), this protein is Large ribosomal subunit protein eL18y (RPL18B).